Consider the following 373-residue polypeptide: Cell surface Cu-only superoxide dismutase ARB_03674 (373 aa).

The N-terminal stretch at 1–55 (MIWKQPPRRMGEMGGSLSRRFGNAAASWAVWRVSRSCFSLLFFFYFFLFFSSSSL) is a signal peptide. Residues Asn75 and Asn141 are each glycosylated (N-linked (GlcNAc...) asparagine). Cu cation is bound by residues His194, His196, and His212. An intrachain disulfide couples Cys206 to Cys289. Asn254 and Asn274 each carry an N-linked (GlcNAc...) asparagine glycan. His280 provides a ligand contact to Cu cation. Residues Asn283 and Asn291 are each glycosylated (N-linked (GlcNAc...) asparagine). The disordered stretch occupies residues 329 to 348 (GHAPTISATYTPTPTPSPPA). The segment covering 331 to 340 (APTISATYTP) has biased composition (low complexity). A lipid anchor (GPI-anchor amidated glycine) is attached at Gly352. A propeptide spans 353 to 373 (AGRLVGFSLGAIMAALVPLAL) (removed in mature form).

The protein belongs to the Cu-Zn superoxide dismutase family. Monomer. The cofactor is Cu cation. In terms of processing, the GPI-anchor is attached to the protein in the endoplasmic reticulum and serves to target the protein to the cell surface. There, the glucosamine-inositol phospholipid moiety is cleaved off and the GPI-modified mannoprotein is covalently attached via its lipidless GPI glycan remnant to the 1,6-beta-glucan of the outer cell wall layer.

The protein resides in the secreted. It localises to the cell wall. It is found in the cell membrane. It carries out the reaction 2 superoxide + 2 H(+) = H2O2 + O2. Functionally, superoxide dismutases serve to convert damaging superoxide radicals, a key form of ROS, to less damaging hydrogen peroxide that can be converted into water by catalase action. Degrades host-derived reactive oxygen species to escape innate immune surveillance. Involved in the occurrence of miconazole-tolerant persisters in biofilms. Persisters are cells that survive high doses of an antimicrobial agent. The unusual attributes of SOD5-like fungal proteins, including the absence of zinc and an open active site that readily captures extracellular copper, make these SODs well suited to meet challenges in zinc and copper availability at the host-pathogen interface. This chain is Cell surface Cu-only superoxide dismutase ARB_03674, found in Arthroderma benhamiae (strain ATCC MYA-4681 / CBS 112371) (Trichophyton mentagrophytes).